A 287-amino-acid polypeptide reads, in one-letter code: L-cysteine S-thiosulfotransferase subunit SoxA (287 aa).

Positions M1–A26 are cleaved as a signal peptide. The 95-residue stretch at D74–S168 folds into the Cytochrome c domain. 7 residues coordinate heme c: C102, C105, H106, C140, C203, C206, and H207. A substrate-binding site is contributed by R244. C248 is a heme c binding site. The Cysteine persulfide intermediate role is filled by C248.

It belongs to the SoxA family. In terms of assembly, heterodimer of SoxA and SoxX. Requires heme c as cofactor. Cysteine persulfide at Cys-248.

The protein localises to the periplasm. The enzyme catalyses L-cysteinyl-[SoxY protein] + thiosulfate + 2 Fe(III)-[cytochrome c] = S-sulfosulfanyl-L-cysteinyl-[SoxY protein] + 2 Fe(II)-[cytochrome c] + 2 H(+). It catalyses the reaction S-sulfanyl-L-cysteinyl-[SoxY protein] + thiosulfate + 2 Fe(III)-[cytochrome c] = S-(2-sulfodisulfanyl)-L-cysteinyl-[SoxY protein] + 2 Fe(II)-[cytochrome c] + 2 H(+). In terms of biological role, C-type diheme cytochrome, which is part of the SoxAX cytochrome complex involved in sulfur oxidation. The SoxAX complex catalyzes the formation of a heterodisulfide bond between the conserved cysteine residue on a sulfur carrier SoxYZ complex subunit SoxY and thiosulfate or other inorganic sulfur substrates. This leads to the liberation of two electrons, which may be transferred from the SoxAX complex to another cytochrome c and which then may be used for reductive CO(2) fixation. The protein is L-cysteine S-thiosulfotransferase subunit SoxA of Rhodovulum sulfidophilum (Rhodobacter sulfidophilus).